Here is a 164-residue protein sequence, read N- to C-terminus: HTH-type transcriptional regulator IscR (164 aa).

The HTH rrf2-type domain maps to 2–131 (RLTSKGRYAV…NNITLAELVN (130 aa)). The segment at residues 28–51 (LADISERQGISLSYLEQLFSRLRK) is a DNA-binding region (H-T-H motif). 3 residues coordinate [2Fe-2S] cluster: C92, C98, and C104. Residues C92, C98, and C104 each coordinate a metal cation. The segment at 145–164 (DTRRTANGRPQETINVNLRA) is disordered. Over residues 152 to 164 (GRPQETINVNLRA) the composition is skewed to polar residues.

[2Fe-2S] cluster serves as cofactor.

Functionally, regulates the transcription of several operons and genes involved in the biogenesis of Fe-S clusters and Fe-S-containing proteins. In Serratia proteamaculans (strain 568), this protein is HTH-type transcriptional regulator IscR.